Here is a 1791-residue protein sequence, read N- to C-terminus: 1-phosphatidylinositol-3-phosphate 5-kinase FAB1B (1791 aa).

An FYVE-type zinc finger spans residues 39-105 (DQSCRVCYEC…VCNYCFRQWE (67 aa)). Zn(2+) is bound by residues Cys45, Cys48, Cys61, Cys64, Cys69, Cys72, Cys97, and Cys100. 4 disordered regions span residues 166–186 (HGVS…SRRS), 279–370 (EQFQ…DRTT), 770–790 (SDLS…NPIV), and 834–859 (QQNN…DHQS). Basic and acidic residues predominate over residues 279-293 (EQFQKKSEHDGRDEC). The segment covering 324-345 (PENEEDERESALFDEEDNEGDA) has biased composition (acidic residues). Over residues 838-850 (EKPKETQSQKEEF) the composition is skewed to basic and acidic residues. Residues 1077–1111 (EKGFRRRIGELEEVLQKEKAEFEENMQKILHREVN) are a coiled coil. The span at 1151–1164 (NSDDTKREENEKPP) shows a compositional bias: basic and acidic residues. Residues 1151-1242 (NSDDTKREEN…DTSYPLENKV (92 aa)) are disordered. 2 stretches are compositionally biased toward polar residues: residues 1167–1188 (KSQT…SEVN) and 1196–1206 (TGDTGSLNNVQ). In terms of domain architecture, PIPK spans 1433–1758 (SELNIPRPVD…RFRKAMTTYF (326 aa)). Residues 1769-1791 (NVVANNSKSDQPEETSQAGTQAE) form a disordered region. The segment covering 1771 to 1791 (VANNSKSDQPEETSQAGTQAE) has biased composition (polar residues).

As to quaternary structure, component of the PI(3,5)P2 regulatory complex at least composed of ATG18, SAC/FIG4, FAB1 and VAC14. Mg(2+) is required as a cofactor. The cofactor is Mn(2+). Ubiquitous with highest expression levels in the root hair zone, pollen, and stamens.

It is found in the endosome membrane. The catalysed reaction is a 1,2-diacyl-sn-glycero-3-phospho-(1D-myo-inositol-3-phosphate) + ATP = a 1,2-diacyl-sn-glycero-3-phospho-(1D-myo-inositol-3,5-bisphosphate) + ADP + H(+). The PI(3,5)P2 regulatory complex regulates both the synthesis and turnover of phosphatidylinositol 3,5-bisphosphate (PtdIns(3,5)P2). Catalyzes the phosphorylation of phosphatidylinositol 3-phosphate on the fifth hydroxyl of the myo-inositol ring, to form phosphatidylinositol 3,5-bisphosphate. Plays an important role in maintenance of endomembrane homeostasis including endocytosis, vacuole formation, and vacuolar acidification processes. Required for development of viable pollen. Might mediate recycling of auxin transporters. The sequence is that of 1-phosphatidylinositol-3-phosphate 5-kinase FAB1B (FAB1B) from Arabidopsis thaliana (Mouse-ear cress).